The following is a 216-amino-acid chain: Protein Syd (216 aa).

The protein belongs to the Syd family.

It is found in the cell inner membrane. Interacts with the SecY protein in vivo. May bind preferentially to an uncomplexed state of SecY, thus functioning either as a chelating agent for excess SecY in the cell or as a regulatory factor that negatively controls the translocase function. The protein is Protein Syd of Shewanella frigidimarina (strain NCIMB 400).